Consider the following 370-residue polypeptide: tRNA 2-selenouridine synthase (370 aa).

The 125-residue stretch at 12–136 (FLDDVPMMDM…MRTFLLETTQ (125 aa)) folds into the Rhodanese domain. The S-selanylcysteine intermediate role is filled by Cys-95.

It belongs to the SelU family. As to quaternary structure, monomer.

The enzyme catalyses 5-methylaminomethyl-2-thiouridine(34) in tRNA + selenophosphate + (2E)-geranyl diphosphate + H2O + H(+) = 5-methylaminomethyl-2-selenouridine(34) in tRNA + (2E)-thiogeraniol + phosphate + diphosphate. It carries out the reaction 5-methylaminomethyl-2-thiouridine(34) in tRNA + (2E)-geranyl diphosphate = 5-methylaminomethyl-S-(2E)-geranyl-thiouridine(34) in tRNA + diphosphate. The catalysed reaction is 5-methylaminomethyl-S-(2E)-geranyl-thiouridine(34) in tRNA + selenophosphate + H(+) = 5-methylaminomethyl-2-(Se-phospho)selenouridine(34) in tRNA + (2E)-thiogeraniol. It catalyses the reaction 5-methylaminomethyl-2-(Se-phospho)selenouridine(34) in tRNA + H2O = 5-methylaminomethyl-2-selenouridine(34) in tRNA + phosphate. Functionally, involved in the post-transcriptional modification of the uridine at the wobble position (U34) of tRNA(Lys), tRNA(Glu) and tRNA(Gln). Catalyzes the conversion of 2-thiouridine (S2U-RNA) to 2-selenouridine (Se2U-RNA). Acts in a two-step process involving geranylation of 2-thiouridine (S2U) to S-geranyl-2-thiouridine (geS2U) and subsequent selenation of the latter derivative to 2-selenouridine (Se2U) in the tRNA chain. In Pseudomonas putida (strain ATCC 47054 / DSM 6125 / CFBP 8728 / NCIMB 11950 / KT2440), this protein is tRNA 2-selenouridine synthase.